A 595-amino-acid polypeptide reads, in one-letter code: uncharacterized protein (595 aa).

The first 23 residues, 1–23, serve as a signal peptide directing secretion; it reads MLSLSSPPWLLLLVLFFFANGSA. N-linked (GlcNAc...) asparagine glycosylation is found at asparagine 31, asparagine 63, asparagine 88, asparagine 112, asparagine 144, asparagine 187, asparagine 205, asparagine 389, asparagine 480, asparagine 492, and asparagine 506. Residues 61–83 show a composition bias toward polar residues; that stretch reads LENQTASSSNLNTNNEASDEQTG. 2 disordered regions span residues 61-119 and 141-164; these read LENQ…VSSL and TALNGSGTPPEHQTIGQAPPTKGE. Residues 84-119 show a composition bias toward low complexity; sequence NSNSNTSSHSRNINGLPSSNSNIDNANSNSSSVSSL.

The protein resides in the secreted. This is an uncharacterized protein from Drosophila melanogaster (Fruit fly).